The chain runs to 155 residues: Endoribonuclease YbeY (155 aa).

The tract at residues 64-84 (SFPMDEMRAPGDDEDPPSGLL) is disordered. Zn(2+) is bound by residues histidine 115, histidine 119, and histidine 125.

The protein belongs to the endoribonuclease YbeY family. Zn(2+) is required as a cofactor.

Its subcellular location is the cytoplasm. Single strand-specific metallo-endoribonuclease involved in late-stage 70S ribosome quality control and in maturation of the 3' terminus of the 16S rRNA. The sequence is that of Endoribonuclease YbeY from Cutibacterium acnes (strain DSM 16379 / KPA171202) (Propionibacterium acnes).